The primary structure comprises 208 residues: LexA repressor (208 aa).

Positions 28 to 48 form a DNA-binding region, H-T-H motif; the sequence is VREIGEAVGLASSSTVHGHLA. Residues S130 and K168 each act as for autocatalytic cleavage activity in the active site.

The protein belongs to the peptidase S24 family. As to quaternary structure, homodimer.

It catalyses the reaction Hydrolysis of Ala-|-Gly bond in repressor LexA.. Functionally, represses a number of genes involved in the response to DNA damage (SOS response), including recA and lexA. In the presence of single-stranded DNA, RecA interacts with LexA causing an autocatalytic cleavage which disrupts the DNA-binding part of LexA, leading to derepression of the SOS regulon and eventually DNA repair. The sequence is that of LexA repressor from Shouchella clausii (strain KSM-K16) (Alkalihalobacillus clausii).